We begin with the raw amino-acid sequence, 71 residues long: Exodeoxyribonuclease 7 small subunit (71 aa).

The protein belongs to the XseB family. In terms of assembly, heterooligomer composed of large and small subunits.

Its subcellular location is the cytoplasm. The enzyme catalyses Exonucleolytic cleavage in either 5'- to 3'- or 3'- to 5'-direction to yield nucleoside 5'-phosphates.. Its function is as follows. Bidirectionally degrades single-stranded DNA into large acid-insoluble oligonucleotides, which are then degraded further into small acid-soluble oligonucleotides. This is Exodeoxyribonuclease 7 small subunit from Clostridium botulinum (strain Loch Maree / Type A3).